Consider the following 446-residue polypeptide: MREIVHIQAGQCGNQIGGKFWEVISDEHCIDATGTYYGDSDLQLERINVYYNEATGAKYVPRAILVDLEPGTMDSVRSGAFGQIFRPDNFVFGQSGAGNNWAKGHYTEGAELVDSVLDVVRKESEGCDCLQGFQLTHSLGGGTGSGMGTLLISKIREEYPDRIMNTFSVVPSPKVSDTVVEPYNATLSVHQLVENTDETYCIDNEALYDICFRTLKLTTPTYGDLNHLVSATMSGVTTCLRFPGQLNADLRKLAVNMVPFPRLHFFMPGFAPLTSRGSQQYRALTVPELTQQMFDAKNMMAACDPRHGRYLTVAAIFRGRMSMKEVDEQMLNIQNKNSSFFVEWIPNNCKTAVCDIPPRGLKMSATFIGNSTAIQELFKRVSEQFTAMFRRKAFLHWYTGEGMDEMEFTEAESNMNDLVSEYQQYQEATADEEGEFDEDEEGGGDE.

GTP contacts are provided by Gln-11, Glu-69, Ser-138, Gly-142, Thr-143, Gly-144, Asn-204, and Asn-226. Residue Glu-69 coordinates Mg(2+). The tract at residues 424 to 446 (QYQEATADEEGEFDEDEEGGGDE) is disordered. A compositionally biased stretch (acidic residues) spans 429 to 446 (TADEEGEFDEDEEGGGDE).

This sequence belongs to the tubulin family. As to quaternary structure, dimer of alpha and beta chains. A typical microtubule is a hollow water-filled tube with an outer diameter of 25 nm and an inner diameter of 15 nM. Alpha-beta heterodimers associate head-to-tail to form protofilaments running lengthwise along the microtubule wall with the beta-tubulin subunit facing the microtubule plus end conferring a structural polarity. Microtubules usually have 13 protofilaments but different protofilament numbers can be found in some organisms and specialized cells. The cofactor is Mg(2+). Testis specific.

It is found in the cytoplasm. It localises to the cytoskeleton. Tubulin is the major constituent of microtubules, a cylinder consisting of laterally associated linear protofilaments composed of alpha- and beta-tubulin heterodimers. Microtubules grow by the addition of GTP-tubulin dimers to the microtubule end, where a stabilizing cap forms. Below the cap, tubulin dimers are in GDP-bound state, owing to GTPase activity of alpha-tubulin. This chain is Tubulin beta-2 chain (betaTub85D), found in Drosophila melanogaster (Fruit fly).